Consider the following 180-residue polypeptide: Ribulose bisphosphate carboxylase small subunit, chloroplastic (180 aa).

The N-terminal 56 residues, 1-56 (MASSVLSSAAVATRSNVAQANMVAPFTGLKSAASFPVSRKQNLDITSIASNGGRVQ), are a transit peptide targeting the chloroplast.

It belongs to the RuBisCO small chain family. Heterohexadecamer of 8 large and 8 small subunits.

The protein localises to the plastid. The protein resides in the chloroplast. In terms of biological role, ruBisCO catalyzes two reactions: the carboxylation of D-ribulose 1,5-bisphosphate, the primary event in carbon dioxide fixation, as well as the oxidative fragmentation of the pentose substrate. Both reactions occur simultaneously and in competition at the same active site. Although the small subunit is not catalytic it is essential for maximal activity. The protein is Ribulose bisphosphate carboxylase small subunit, chloroplastic of Nicotiana plumbaginifolia (Leadwort-leaved tobacco).